A 171-amino-acid polypeptide reads, in one-letter code: Large ribosomal subunit protein bL9 (171 aa).

Belongs to the bacterial ribosomal protein bL9 family.

Its function is as follows. Binds to the 23S rRNA. The chain is Large ribosomal subunit protein bL9 from Rickettsia conorii (strain ATCC VR-613 / Malish 7).